Here is a 272-residue protein sequence, read N- to C-terminus: tRNA pseudouridine synthase B (272 aa).

The Nucleophile role is filled by aspartate 38.

The protein belongs to the pseudouridine synthase TruB family. Type 1 subfamily.

The catalysed reaction is uridine(55) in tRNA = pseudouridine(55) in tRNA. In terms of biological role, responsible for synthesis of pseudouridine from uracil-55 in the psi GC loop of transfer RNAs. The chain is tRNA pseudouridine synthase B from Campylobacter jejuni subsp. jejuni serotype O:23/36 (strain 81-176).